Reading from the N-terminus, the 264-residue chain is tRNA (guanine-N(1)-)-methyltransferase (264 aa).

S-adenosyl-L-methionine is bound by residues G125 and 145 to 150 (LGDFVL).

It belongs to the RNA methyltransferase TrmD family. Homodimer.

It localises to the cytoplasm. It catalyses the reaction guanosine(37) in tRNA + S-adenosyl-L-methionine = N(1)-methylguanosine(37) in tRNA + S-adenosyl-L-homocysteine + H(+). Specifically methylates guanosine-37 in various tRNAs. The chain is tRNA (guanine-N(1)-)-methyltransferase from Burkholderia lata (strain ATCC 17760 / DSM 23089 / LMG 22485 / NCIMB 9086 / R18194 / 383).